The primary structure comprises 418 residues: L-rhamnose isomerase (418 aa).

Mn(2+) is bound by residues His-262, Asp-294, and Asp-296.

This sequence belongs to the rhamnose isomerase family. In terms of assembly, homotetramer. The cofactor is Mn(2+).

The protein localises to the cytoplasm. The catalysed reaction is L-rhamnopyranose = L-rhamnulose. The protein operates within carbohydrate degradation; L-rhamnose degradation; glycerone phosphate from L-rhamnose: step 1/3. Its function is as follows. Catalyzes the interconversion of L-rhamnose and L-rhamnulose. This is L-rhamnose isomerase from Cronobacter sakazakii (strain ATCC BAA-894) (Enterobacter sakazakii).